The primary structure comprises 1363 residues: Homeobox protein 13 (1363 aa).

A coiled-coil region spans residues 15–73; it reads FVMEQIQQQQQQQQQQQQQQQQQQQQQQQQQQQQLQQQQQQQQQQQQQQQQQQQQQQQN. 9 disordered regions span residues 66-96, 120-177, 308-437, 621-731, 765-818, 857-911, 1001-1137, 1166-1202, and 1270-1341; these read QQQQQQQNPKMNNQPNETRLPSPPLLNSTVP, SQHA…INGS, INGT…YHGG, LNSP…QHQQ, HHHH…PQHS, SINS…SNSI, QNYN…TLIN, NFINNNSNNNNNMEIDDDDEDGIDGIEGEDDSKKRMR, and ISFG…TLIS. Residues 73-96 show a composition bias toward polar residues; the sequence is NPKMNNQPNETRLPSPPLLNSTVP. Residues 132–147 show a composition bias toward low complexity; it reads SLNSSNNNNNNNFNNS. Over residues 148-158 the composition is skewed to polar residues; sequence RPTFSSCSGNS. Low complexity-rich tracts occupy residues 159-177 and 315-326; these read NNTTTTTTTTTTTNPINGS and SNHSNNNNNNNN. Basic residues predominate over residues 327-339; that stretch reads NHHHHHHHHHQKR. Positions 348 to 378 are enriched in low complexity; it reads TNHLTPLPLLHKHTNNNNNINNNNNHNHNNI. Residues 379-393 show a composition bias toward polar residues; sequence LGSPNQLNRSQDFTS. Low complexity-rich tracts occupy residues 394 to 408, 415 to 426, 641 to 693, 709 to 731, and 770 to 793; these read KNNNINNNNNNNNKI, NKGSPNQNSSEN, NNNS…NNNI, HHQQQLQHQQHQQQQLLHQQHQQ, and QQQQQQQQQQQHNNNNNNNNSNHN. The stretch at 738-789 forms a coiled coil; sequence QQQLQIQYQQQQTHNNNLNQTQQLYYNHHHHQQQQQQQQQQQQHNNNNNNNN. Polar residues-rich tracts occupy residues 794-818 and 857-883; these read SVLTSPPLSQFPKTPLQLSQTPQHS and SINSNSGMSLPMISSPSPNLSHMQKNR. Low complexity-rich tracts occupy residues 889-911, 1001-1031, and 1045-1063; these read ILNSSLSSSNTTNSATTSSSNSI, QNYNENNNNNNNNNNNNYNINNINNNNNNNF, and NINNNNNNNNNNNNNNNNN. A compositionally biased stretch (basic and acidic residues) spans 1064–1078; that stretch reads KNDKNESEFESKEKL. Residues 1081–1095 show a composition bias toward polar residues; it reads PFGSSIPNIVNNEQL. Composition is skewed to low complexity over residues 1096–1116, 1123–1137, and 1166–1177; these read SPYSQQSLSSSSSENPSPQWS, TSSSKLSNSTSTLIN, and NFINNNSNNNNN. Residues 1179–1195 are compositionally biased toward acidic residues; that stretch reads EIDDDDEDGIDGIEGED. A DNA-binding region (homeobox) is located at residues 1198-1261; the sequence is KKRMRKTTRP…NRRTKDKLKN (64 aa). Low complexity predominate over residues 1275-1294; sequence SSTSSTQTSTNSPSSQLSPL. Residues 1297–1316 are compositionally biased toward polar residues; that stretch reads NMNNNDQQSISTPSLILSQI. Residues 1317–1334 are compositionally biased toward low complexity; it reads NNNQNNNQNNNNNNNTNN.

It localises to the nucleus. Its function is as follows. Putative transcription factor. The chain is Homeobox protein 13 (hbx13) from Dictyostelium discoideum (Social amoeba).